A 104-amino-acid chain; its full sequence is Large ribosomal subunit protein bL21 (104 aa).

This sequence belongs to the bacterial ribosomal protein bL21 family. In terms of assembly, part of the 50S ribosomal subunit. Contacts protein L20.

In terms of biological role, this protein binds to 23S rRNA in the presence of protein L20. The polypeptide is Large ribosomal subunit protein bL21 (Nitrosococcus oceani (strain ATCC 19707 / BCRC 17464 / JCM 30415 / NCIMB 11848 / C-107)).